Reading from the N-terminus, the 422-residue chain is GTPase Obg (422 aa).

The Obg domain maps to 1 to 158; the sequence is MFYDRARIFV…RWLDLELKLL (158 aa). Residues 159 to 329 enclose the OBG-type G domain; sequence ADVGLVGFPN…LVYRVSALLE (171 aa). Residues 165–172, 190–194, 212–215, 282–285, and 310–312 each bind GTP; these read GFPNAGKS, FTTIT, DIPG, NKMD, and SAV. Mg(2+) is bound by residues Ser-172 and Thr-192. The 86-residue stretch at 337 to 422 folds into the OCT domain; sequence VPEALERPVI…IGDYEFEYVE (86 aa).

The protein belongs to the TRAFAC class OBG-HflX-like GTPase superfamily. OBG GTPase family. In terms of assembly, monomer. Requires Mg(2+) as cofactor.

The protein localises to the cytoplasm. Its function is as follows. An essential GTPase which binds GTP, GDP and possibly (p)ppGpp with moderate affinity, with high nucleotide exchange rates and a fairly low GTP hydrolysis rate. Plays a role in control of the cell cycle, stress response, ribosome biogenesis and in those bacteria that undergo differentiation, in morphogenesis control. The sequence is that of GTPase Obg from Pelotomaculum thermopropionicum (strain DSM 13744 / JCM 10971 / SI).